The sequence spans 159 residues: Cystatin-9 (159 aa).

An N-terminal signal peptide occupies residues 1–28 (MSSPQRRKAMPWALSLLLMGFQLLVTYA).

It belongs to the cystatin family. Expressed in heart, placenta, lung, liver, skeletal muscle and pancreas. Not expressed in brain. Expressed in epididymis, kidney, testis, spinal cord, and thymus with a strong expression in epididymis and kidney and a weak expression in the spinal cord and thymus.

The protein resides in the secreted. May be involved in testis development. May play a role in hematopoietic differentiation or inflammation. Has immunomodulatory and antimicrobial functions against Francisella tularensis, a Gram-negative bacteria. The polypeptide is Cystatin-9 (CST9) (Homo sapiens (Human)).